We begin with the raw amino-acid sequence, 230 residues long: Orotidine 5'-phosphate decarboxylase (230 aa).

Residues Asp-10, Lys-32, Asp-59–Thr-68, Thr-118, Arg-179, Gln-188, Gly-208, and Arg-209 contribute to the substrate site. Lys-61 acts as the Proton donor in catalysis.

The protein belongs to the OMP decarboxylase family. Type 1 subfamily. In terms of assembly, homodimer.

The catalysed reaction is orotidine 5'-phosphate + H(+) = UMP + CO2. It functions in the pathway pyrimidine metabolism; UMP biosynthesis via de novo pathway; UMP from orotate: step 2/2. Functionally, catalyzes the decarboxylation of orotidine 5'-monophosphate (OMP) to uridine 5'-monophosphate (UMP). The chain is Orotidine 5'-phosphate decarboxylase from Opitutus terrae (strain DSM 11246 / JCM 15787 / PB90-1).